Reading from the N-terminus, the 454-residue chain is Chromosomal replication initiator protein DnaA (454 aa).

A domain I, interacts with DnaA modulators region spans residues 1–83; the sequence is MTEKEHFFWN…IKVEYVFDEA (83 aa). A domain II region spans residues 83–113; that stretch reads ALVSETKPTLANNDFSNKREQQTPDLPTLNS. The domain III, AAA+ region stretch occupies residues 114 to 332; it reads DLNSKYTFDN…GALKDISLVA (219 aa). Residues Gly-158, Gly-160, Lys-161, and Thr-162 each coordinate ATP. The domain IV, binds dsDNA stretch occupies residues 333–454; it reads NVRQLDTITV…EIDTIKNKIK (122 aa).

Belongs to the DnaA family. Oligomerizes as a right-handed, spiral filament on DNA at oriC.

The protein resides in the cytoplasm. Functionally, plays an essential role in the initiation and regulation of chromosomal replication. ATP-DnaA binds to the origin of replication (oriC) to initiate formation of the DNA replication initiation complex once per cell cycle. Binds the DnaA box (a 9 base pair repeat at the origin) and separates the double-stranded (ds)DNA. Forms a right-handed helical filament on oriC DNA; dsDNA binds to the exterior of the filament while single-stranded (ss)DNA is stabiized in the filament's interior. The ATP-DnaA-oriC complex binds and stabilizes one strand of the AT-rich DNA unwinding element (DUE), permitting loading of DNA polymerase. After initiation quickly degrades to an ADP-DnaA complex that is not apt for DNA replication. Binds acidic phospholipids. The polypeptide is Chromosomal replication initiator protein DnaA (Streptococcus thermophilus (strain ATCC BAA-250 / LMG 18311)).